The primary structure comprises 90 residues: E22 protein (90 aa).

This Bacillus subtilis (Bacteriophage SP01) protein is E22 protein (43).